The sequence spans 192 residues: Ion-translocating oxidoreductase complex subunit B (192 aa).

The interval 1–26 (MNAIWIAVVAVSLLGLAFGAILGYAS) is hydrophobic. The region spanning 32-91 (EDDPVVEKIDEILPQSQCGQCGYPGCRPYAEAIGSQGEKINRCAPGGEAVMLKIATLLNV) is the 4Fe-4S domain. Residues Cys49, Cys52, Cys57, Cys74, Cys117, Cys120, Cys123, Cys127, Cys147, Cys150, Cys153, and Cys157 each contribute to the [4Fe-4S] cluster site. 2 consecutive 4Fe-4S ferredoxin-type domains span residues 108 to 137 (MLAVIDENNCIGCTKCIQACPVDAIVGATR) and 138 to 167 (AMHTVMSDLCTGCNLCVDPCPTQCIELRPV).

It belongs to the 4Fe4S bacterial-type ferredoxin family. RnfB subfamily. The complex is composed of six subunits: RnfA, RnfB, RnfC, RnfD, RnfE and RnfG. [4Fe-4S] cluster serves as cofactor.

The protein localises to the cell inner membrane. In terms of biological role, part of a membrane-bound complex that couples electron transfer with translocation of ions across the membrane. The sequence is that of Ion-translocating oxidoreductase complex subunit B from Citrobacter koseri (strain ATCC BAA-895 / CDC 4225-83 / SGSC4696).